We begin with the raw amino-acid sequence, 314 residues long: Olfactory receptor 1 (314 aa).

Over 1–29 the chain is Extracellular; that stretch reads MTERNQTVISQFLLLGLPIPPEHQHVFYA. An N-linked (GlcNAc...) asparagine glycan is attached at N5. A helical membrane pass occupies residues 30–50; it reads LFLSMYLTTVLGNLIIIILIL. The Cytoplasmic portion of the chain corresponds to 51–59; the sequence is LDSHLHTPM. The chain crosses the membrane as a helical span at residues 60–81; the sequence is YLFLSNLSFSDLCFSSVTMPKL. At 82-97 the chain is on the extracellular side; sequence LQNMQSQVPSIPYAGC. C97 and C179 form a disulfide bridge. A helical membrane pass occupies residues 98–118; it reads LSQIYFFLFFGDLGNFLLVAM. The Cytoplasmic portion of the chain corresponds to 119–143; that stretch reads AYDRYVAICFPLHYMSIMSPKLCVS. Residues 144–164 traverse the membrane as a helical segment; it reads LVVLSWVLTTFHAMLHTLLMA. Topologically, residues 165–196 are extracellular; it reads RLSFCEDNVIPHFFCDMSALLKLACSDTRVNE. The chain crosses the membrane as a helical span at residues 197–217; sequence VVIFIVVSLFLVLPFALIIMS. Over 218–240 the chain is Cytoplasmic; it reads YVRIVSSILKVPSSQGIYKAFST. The helical transmembrane segment at 241–261 threads the bilayer; that stretch reads CGSHLSVVSLFYGTVIGLYLC. Over 262–271 the chain is Extracellular; the sequence is PSSNNSTVKE. N265 and N266 each carry an N-linked (GlcNAc...) asparagine glycan. The helical transmembrane segment at 272-292 threads the bilayer; it reads TVMSLMYTVVTPMLNPFIYSL. At 293–314 the chain is on the cytoplasmic side; it reads RNRDIKGAMERIFCKRKIQLNL.

It belongs to the G-protein coupled receptor 1 family. In terms of tissue distribution, olfactory epithelium.

It localises to the cell membrane. Functionally, odorant receptor. Activated by a lily-derived aldehyde as well as other odorants. May signal through an inositol 1,4,5-trisphosphate (IP3) second messenger system. In Rattus norvegicus (Rat), this protein is Olfactory receptor 1.